Consider the following 89-residue polypeptide: Small ribosomal subunit protein uS15 (89 aa).

The protein belongs to the universal ribosomal protein uS15 family. As to quaternary structure, part of the 30S ribosomal subunit. Forms a bridge to the 50S subunit in the 70S ribosome, contacting the 23S rRNA.

Functionally, one of the primary rRNA binding proteins, it binds directly to 16S rRNA where it helps nucleate assembly of the platform of the 30S subunit by binding and bridging several RNA helices of the 16S rRNA. Forms an intersubunit bridge (bridge B4) with the 23S rRNA of the 50S subunit in the ribosome. This chain is Small ribosomal subunit protein uS15, found in Chlorobium phaeobacteroides (strain BS1).